Consider the following 817-residue polypeptide: Dolichyl-phosphate-mannose--protein mannosyltransferase 1 (817 aa).

Position 2 is an N-acetylserine (Ser2). The Cytoplasmic segment spans residues 2 to 50; it reads SEEKTYKRVEQDDPVPELDIKQGPVRPFIVTDPSAELASLRTMVTLKEK. A helical transmembrane segment spans residues 51-70; that stretch reads LLVACLAVFTAVIRLHGLAW. At 71 to 135 the chain is on the lumenal side; sequence PDSVVFDEVH…DSFPSTTPYV (65 aa). The chain crosses the membrane as a helical span at residues 136 to 154; that stretch reads LMRFFSASLGALTVILMYM. Residues 155-179 are Cytoplasmic-facing; the sequence is TLRYSGVRMWVALMSAICFAVENSY. A helical membrane pass occupies residues 180-200; it reads VTISRYILLDAPLMFFIAAAV. Topologically, residues 201 to 234 are lumenal; it reads YSFKKYEMYPANSLNAYKSLLATGIALGMASSSK. The chain crosses the membrane as a helical span at residues 235–259; the sequence is WVGLFTVTWVGLLCIWRLWFMIGDL. The Cytoplasmic portion of the chain corresponds to 260 to 273; the sequence is TKSSKSIFKVAFAK. Residues 274-291 form a helical membrane-spanning segment; sequence LAFLLGVPFALYLVFFYI. The Lumenal segment spans residues 292 to 584; it reads HFQSLTLDGD…GENNRNVYLL (293 aa). MIR domains lie at 324 to 378, 388 to 448, and 459 to 514; these read VADV…LELY, FQNL…VEID, and ERVI…VENN. Asn390 and Asn513 each carry an N-linked (GlcNAc...) asparagine glycan. The chain crosses the membrane as a helical span at residues 585–605; that stretch reads GNAIVWWAVTAFIGIFGLIVI. The Cytoplasmic portion of the chain corresponds to 606 to 685; the sequence is TELFSWQLGK…SYVFRSKRQM (80 aa). A helical transmembrane segment spans residues 686-710; the sequence is GYAVVITFLAASVYFFKSFSPIIYG. The Lumenal segment spans residues 711–817; that stretch reads TPWTQELCQK…LKVEKRAVLE (107 aa). Asn743 is a glycosylation site (N-linked (GlcNAc...) asparagine).

It belongs to the glycosyltransferase 39 family. PMT1 and PMT2 form a functional heterodimer. The complex interacts with endoplasmic reticulum proteins EMP24, ERV25, ERP1, ERP2, CDC48, HRD1, USA1, YOS9, ERO1, PDI1, UBR1, Cue4, DFM1 and TED1. Forms also a minor complex with PMT3.

It localises to the endoplasmic reticulum membrane. The catalysed reaction is a di-trans,poly-cis-dolichyl beta-D-mannosyl phosphate + L-seryl-[protein] = 3-O-(alpha-D-mannosyl)-L-seryl-[protein] + a di-trans,poly-cis-dolichyl phosphate + H(+). It carries out the reaction a di-trans,poly-cis-dolichyl beta-D-mannosyl phosphate + L-threonyl-[protein] = 3-O-(alpha-D-mannosyl)-L-threonyl-[protein] + a di-trans,poly-cis-dolichyl phosphate + H(+). Its pathway is protein modification; protein glycosylation. Protein O-mannosyltransferase involved in O-glycosylation which is essential for cell wall rigidity. Forms a heterodimeric complex with PMT2 and more rarely with PMT3 to transfer mannose from Dol-P-mannose to Ser or Thr residues on proteins. The PMT1-PMT2 complex participates in oxidative protein folding, ER-associated protein degradation (ERAD), as well as ER export. Required for incorporation of proteins in the cell wall. This Saccharomyces cerevisiae (strain ATCC 204508 / S288c) (Baker's yeast) protein is Dolichyl-phosphate-mannose--protein mannosyltransferase 1.